The following is a 35-amino-acid chain: Non-specific lipid-transfer protein 1 (35 aa).

Residues Cys-13 and Cys-28 are joined by a disulfide bond.

In terms of tissue distribution, seeds.

Plant non-specific lipid-transfer proteins transfer phospholipids as well as galactolipids across membranes. May play a role in wax or cutin deposition in the cell walls of expanding epidermal cells and certain secretory tissues. Inhibits the growth of F.oxysporum and P.infestans. This Nigella sativa (Black cumin) protein is Non-specific lipid-transfer protein 1.